A 118-amino-acid chain; its full sequence is Basic phospholipase A2 3 (118 aa).

Disulfide bonds link C11/C71, C27/C117, C29/C45, C44/C98, C51/C91, C60/C84, and C78/C89. The Ca(2+) site is built by Y28, G30, and G32. Residue H48 is part of the active site. D49 is a Ca(2+) binding site. D92 is a catalytic residue.

It belongs to the phospholipase A2 family. Group I subfamily. D49 sub-subfamily. In terms of assembly, monomer. Requires Ca(2+) as cofactor. As to expression, expressed by the venom gland.

It is found in the secreted. It carries out the reaction a 1,2-diacyl-sn-glycero-3-phosphocholine + H2O = a 1-acyl-sn-glycero-3-phosphocholine + a fatty acid + H(+). PLA2 catalyzes the calcium-dependent hydrolysis of the 2-acyl groups in 3-sn-phosphoglycerides. The polypeptide is Basic phospholipase A2 3 (Laticauda semifasciata (Black-banded sea krait)).